The following is a 330-amino-acid chain: Zinc finger protein Gfi-1b (330 aa).

Residues 1–20 form an SNAG domain region; the sequence is MPRSFLVKSKKAHTYHQPRA. Disordered regions lie at residues 1 to 21 and 75 to 99; these read MPRSFLVKSKKAHTYHQPRAQ and MASAPEGPLVTPQPQDGESPLSESP. Position 8 is an N6,N6-dimethyllysine (Lys-8). Positions 91–330 are interaction with ARIH2; the sequence is GESPLSESPP…RHRESQHNLK (240 aa). C2H2-type zinc fingers lie at residues 163–186, 192–214, 220–242, 248–270, 276–298, and 304–327; these read YHCVKCNKVFSTPHGLEVHVRRSH, FACDVCGKTFGHAVSLEQHTHVH, FECRMCGKAFKRSSTLSTHLLIH, YPCQFCGKRFHQKSDMKKHTYIH, HKCQVCGKAFSQSSNLITHSRKH, and FSCELCTKGFQRKVDLRRHRESQH. The segment at 164-330 is mediates interaction with GATA1; that stretch reads HCVKCNKVFS…RHRESQHNLK (167 aa).

As to quaternary structure, interacts with histone methyltransferases EHMT2 and SUV39H1. Interacts with ARIH2 (via RING-type 2) and with RUNX1T1. Forms a complex with GATA1. Component of a RCOR-GFI-KDM1A-HDAC complex. Interacts directly with RCOR1, KDM1A and HDAC2. Post-translationally, methylation at Lys-8 in the SNAG domain seems required for the recruitment of the corepressor complex. As to expression, expressed in bone marrow and in spleen. Detected in hematopoietic stem cells, erythroblasts, and megakaryocytes. Expressed in thymocytes.

Its subcellular location is the nucleus. Essential proto-oncogenic transcriptional regulator necessary for development and differentiation of erythroid and megakaryocytic lineages. Component of a RCOR-GFI-KDM1A-HDAC complex that suppresses, via histone deacetylase (HDAC) recruitment, a number of genes implicated in multilineage blood cell development and controls hematopoietic differentiation. Transcriptional repressor or activator depending on both promoter and cell type context; represses promoter activity of SOCS1 and SOCS3 and thus, may regulate cytokine signaling pathways. Cooperates with GATA1 to repress target gene transcription, such as the apoptosis regulator BCL2L1; GFI1B silencing in leukemic cell lines markedly increase apoptosis rate. Inhibits down-regulation of MYC and MYB as well as the cyclin-dependent kinase inhibitor CDKN1A/P21WAF1 in IL6-treated myelomonocytic cells. Represses expression of GATA3 in T-cell lymphomas and inhibits GATA1-mediated transcription; as GATA1 also mediates erythroid GFI1B transcription, both GATA1 and GFI1B participate in a feedback regulatory pathway controlling the expression of GFI1B gene in erythroid cells. Suppresses GATA1-mediated stimulation of GFI1B promoter through protein interaction. Binds to gamma-satellite DNA and to its own promoter, auto-repressing its own expression. Alters histone methylation by recruiting histone methyltransferase to target genes promoters. Plays a role in heterochromatin formation. The sequence is that of Zinc finger protein Gfi-1b (Gfi1b) from Mus musculus (Mouse).